We begin with the raw amino-acid sequence, 42 residues long: Fungal defensin eurocin (42 aa).

Beta-D-GlcNAc-(1-&gt;4)-Mur2Ac(oyl-L-Ala-gamma-D-Glu-L-Lys-D-Ala-D-Ala)-di-trans,octa-cis-undecaprenyl diphosphate-binding residues include Phe-2, Gly-3, Cys-4, and His-14. 3 disulfide bridges follow: Cys-4–Cys-27, Cys-11–Cys-38, and Cys-15–Cys-40. The segment at 31–35 (WYLGH) is interaction site with membranes lipids. Cys-38 is a beta-D-GlcNAc-(1-&gt;4)-Mur2Ac(oyl-L-Ala-gamma-D-Glu-L-Lys-D-Ala-D-Ala)-di-trans,octa-cis-undecaprenyl diphosphate binding site.

It belongs to the invertebrate defensin family.

The protein resides in the secreted. It is found in the target cell membrane. In terms of biological role, antimicrobial peptide that acts against Gram-positive bacteria but not against Gram-negative bacteria. It selectively inhibits peptidoglycan biosynthesis through complex formation with the cell wall precursor lipid II (1:1 molar ratio) thus inhibiting cell wall synthesis. It does not disrupt cell membranes. In vivo, is effective against an intraperitoneal infection with S.pneumoniae. In vitro, it shows very low hemolytic and cytolytic activities. This Aspergillus amstelodami protein is Fungal defensin eurocin.